We begin with the raw amino-acid sequence, 214 residues long: Osteoclast-stimulating factor 1 (214 aa).

An N-acetylserine modification is found at S2. One can recognise an SH3 domain in the interval 12-71 (GQVKVFRALYTFEPRTPDELYFEEGDIIYITDMSDTSWWKGTCKGRTGLIPSNYVAEQAE). 3 ANK repeats span residues 72 to 101 (SIDN…GVNG), 105 to 135 (AGST…ELNQ), and 139 to 168 (LGDT…RTDL). Position 200 is a phosphothreonine (T200). A phosphoserine mark is found at S202 and S213.

Interacts with SRC and SMN1. Interacts with FASLG.

It is found in the cytoplasm. Functionally, induces bone resorption, acting probably through a signaling cascade which results in the secretion of factor(s) enhancing osteoclast formation and activity. This is Osteoclast-stimulating factor 1 (Ostf1) from Rattus norvegicus (Rat).